The primary structure comprises 115 residues: Glutaredoxin 4 (115 aa).

The 103-residue stretch at 5–107 (IEKIQRQIAE…QLIKETAAKY (103 aa)) folds into the Glutaredoxin domain. Residue lysine 22 participates in glutathione binding. Cysteine 30 serves as a coordination point for [2Fe-2S] cluster. Residues arginine 59, phenylalanine 71, and 84–85 (CD) each bind glutathione.

This sequence belongs to the glutaredoxin family. Monothiol subfamily. Homodimer.

The protein resides in the cytoplasm. In terms of biological role, monothiol glutaredoxin involved in the biogenesis of iron-sulfur clusters. In Shigella flexneri, this protein is Glutaredoxin 4 (grxD).